Reading from the N-terminus, the 468-residue chain is Cysteine--tRNA ligase (468 aa).

Cys-33 contributes to the Zn(2+) binding site. The 'HIGH' region motif lies at 35 to 45 (ATVQGLPHIGH). Zn(2+) contacts are provided by Cys-211, His-236, and Glu-240. The 'KMSKS' region motif lies at 267–271 (KMSKS). Lys-270 contacts ATP.

Belongs to the class-I aminoacyl-tRNA synthetase family. As to quaternary structure, monomer. Zn(2+) is required as a cofactor.

The protein localises to the cytoplasm. The catalysed reaction is tRNA(Cys) + L-cysteine + ATP = L-cysteinyl-tRNA(Cys) + AMP + diphosphate. The sequence is that of Cysteine--tRNA ligase from Mycolicibacterium paratuberculosis (strain ATCC BAA-968 / K-10) (Mycobacterium paratuberculosis).